The primary structure comprises 196 residues: DnaA initiator-associating protein DiaA (196 aa).

The SIS domain occupies 34 to 196 (LVQSLLNGNK…DNTLFPHQDD (163 aa)).

It belongs to the SIS family. DiaA subfamily. Homotetramer; dimer of dimers.

Its function is as follows. Required for the timely initiation of chromosomal replication via direct interactions with the DnaA initiator protein. The sequence is that of DnaA initiator-associating protein DiaA from Klebsiella pneumoniae (strain 342).